The primary structure comprises 158 residues: 2-C-methyl-D-erythritol 2,4-cyclodiphosphate synthase (158 aa).

Positions 8 and 10 each coordinate a divalent metal cation. Residues 8-10 and 34-35 contribute to the 4-CDP-2-C-methyl-D-erythritol 2-phosphate site; these read DVH and HS. His-42 lines the a divalent metal cation pocket. Residues 56–58, 61–65, 132–135, and Phe-139 each bind 4-CDP-2-C-methyl-D-erythritol 2-phosphate; these read DIG, FPDDD, and TTFE.

Belongs to the IspF family. In terms of assembly, homotrimer. The cofactor is a divalent metal cation.

The catalysed reaction is 4-CDP-2-C-methyl-D-erythritol 2-phosphate = 2-C-methyl-D-erythritol 2,4-cyclic diphosphate + CMP. Its pathway is isoprenoid biosynthesis; isopentenyl diphosphate biosynthesis via DXP pathway; isopentenyl diphosphate from 1-deoxy-D-xylulose 5-phosphate: step 4/6. Its function is as follows. Involved in the biosynthesis of isopentenyl diphosphate (IPP) and dimethylallyl diphosphate (DMAPP), two major building blocks of isoprenoid compounds. Catalyzes the conversion of 4-diphosphocytidyl-2-C-methyl-D-erythritol 2-phosphate (CDP-ME2P) to 2-C-methyl-D-erythritol 2,4-cyclodiphosphate (ME-CPP) with a corresponding release of cytidine 5-monophosphate (CMP). This Natranaerobius thermophilus (strain ATCC BAA-1301 / DSM 18059 / JW/NM-WN-LF) protein is 2-C-methyl-D-erythritol 2,4-cyclodiphosphate synthase.